The sequence spans 130 residues: MARQIKRSGTTKQKKNIPVGVAHIQSTFNNTIISITSPTGEVIAWASAGSSGFKGARKGTPFAAQTAAENSARQAMEQGMRQIEVIISGPGSGREMAIKALQATGLEISLIRDITPVPHNGCRPPKRRRV.

It belongs to the universal ribosomal protein uS11 family. As to quaternary structure, part of the 30S ribosomal subunit.

It localises to the plastid. The protein localises to the cyanelle. The protein is Small ribosomal subunit protein uS11c of Cyanophora paradoxa.